Here is a 191-residue protein sequence, read N- to C-terminus: Potassium-transporting ATPase KdpC subunit (191 aa).

A helical transmembrane segment spans residues 11 to 31; the sequence is LFVLLTAVTGVVYPLAVTGIA.

This sequence belongs to the KdpC family. As to quaternary structure, the system is composed of three essential subunits: KdpA, KdpB and KdpC.

The protein resides in the cell inner membrane. In terms of biological role, part of the high-affinity ATP-driven potassium transport (or Kdp) system, which catalyzes the hydrolysis of ATP coupled with the electrogenic transport of potassium into the cytoplasm. This subunit acts as a catalytic chaperone that increases the ATP-binding affinity of the ATP-hydrolyzing subunit KdpB by the formation of a transient KdpB/KdpC/ATP ternary complex. In Dechloromonas aromatica (strain RCB), this protein is Potassium-transporting ATPase KdpC subunit.